Here is a 252-residue protein sequence, read N- to C-terminus: Probable endonuclease 4 (252 aa).

9 residues coordinate Zn(2+): His-56, His-96, Glu-129, Asp-162, His-165, His-191, Asp-204, His-206, and Glu-233.

The protein belongs to the AP endonuclease 2 family. It depends on Zn(2+) as a cofactor.

It carries out the reaction Endonucleolytic cleavage to 5'-phosphooligonucleotide end-products.. Endonuclease IV plays a role in DNA repair. It cleaves phosphodiester bonds at apurinic or apyrimidinic (AP) sites, generating a 3'-hydroxyl group and a 5'-terminal sugar phosphate. The sequence is that of Probable endonuclease 4 from Mycobacterium ulcerans (strain Agy99).